A 144-amino-acid polypeptide reads, in one-letter code: uncharacterized protein (144 aa).

A coiled-coil region spans residues 48 to 119; sequence ELNKLKAKAD…KETEEPKMEL (72 aa).

This is an uncharacterized protein from Archaeoglobus fulgidus (strain ATCC 49558 / DSM 4304 / JCM 9628 / NBRC 100126 / VC-16).